Reading from the N-terminus, the 263-residue chain is 3-methyl-2-oxobutanoate hydroxymethyltransferase (263 aa).

Residues aspartate 45 and aspartate 84 each coordinate Mg(2+). 3-methyl-2-oxobutanoate-binding positions include 45–46 (DS), aspartate 84, and lysine 112. Glutamate 114 provides a ligand contact to Mg(2+). Glutamate 180 functions as the Proton acceptor in the catalytic mechanism.

This sequence belongs to the PanB family. As to quaternary structure, homodecamer; pentamer of dimers. Mg(2+) serves as cofactor.

It is found in the cytoplasm. The catalysed reaction is 3-methyl-2-oxobutanoate + (6R)-5,10-methylene-5,6,7,8-tetrahydrofolate + H2O = 2-dehydropantoate + (6S)-5,6,7,8-tetrahydrofolate. Its pathway is cofactor biosynthesis; (R)-pantothenate biosynthesis; (R)-pantoate from 3-methyl-2-oxobutanoate: step 1/2. Functionally, catalyzes the reversible reaction in which hydroxymethyl group from 5,10-methylenetetrahydrofolate is transferred onto alpha-ketoisovalerate to form ketopantoate. The chain is 3-methyl-2-oxobutanoate hydroxymethyltransferase from Enterobacter sp. (strain 638).